A 550-amino-acid chain; its full sequence is CTP synthase (550 aa).

Residues 1–266 (MNVNYIFVTG…DEYICKYFNL (266 aa)) are amidoligase domain. Residue serine 14 participates in CTP binding. Serine 14 serves as a coordination point for UTP. ATP is bound by residues 15 to 20 (SLGKGI) and aspartate 72. Aspartate 72 and glutamate 140 together coordinate Mg(2+). Residues 147-149 (DIE), 187-192 (KTKPTQ), and lysine 223 each bind CTP. UTP is bound by residues 187–192 (KTKPTQ) and lysine 223. A Glutamine amidotransferase type-1 domain is found at 291–546 (TIGIVGKYIR…INAAIQYQCK (256 aa)). Glycine 353 contacts L-glutamine. The active-site Nucleophile; for glutamine hydrolysis is the cysteine 380. L-glutamine-binding positions include 381-384 (LGMQ), glutamate 404, and arginine 474. Active-site residues include histidine 519 and glutamate 521.

It belongs to the CTP synthase family. As to quaternary structure, homotetramer.

The catalysed reaction is UTP + L-glutamine + ATP + H2O = CTP + L-glutamate + ADP + phosphate + 2 H(+). It carries out the reaction L-glutamine + H2O = L-glutamate + NH4(+). The enzyme catalyses UTP + NH4(+) + ATP = CTP + ADP + phosphate + 2 H(+). It participates in pyrimidine metabolism; CTP biosynthesis via de novo pathway; CTP from UDP: step 2/2. Allosterically activated by GTP, when glutamine is the substrate; GTP has no effect on the reaction when ammonia is the substrate. The allosteric effector GTP functions by stabilizing the protein conformation that binds the tetrahedral intermediate(s) formed during glutamine hydrolysis. Inhibited by the product CTP, via allosteric rather than competitive inhibition. In terms of biological role, catalyzes the ATP-dependent amination of UTP to CTP with either L-glutamine or ammonia as the source of nitrogen. Regulates intracellular CTP levels through interactions with the four ribonucleotide triphosphates. In Blochmanniella floridana, this protein is CTP synthase.